The primary structure comprises 476 residues: Sulfate adenylyltransferase subunit 1 (476 aa).

A tr-type G domain is found at 24-239 (KSLLRFLTCG…LLETVDVDYE (216 aa)). The interval 33–40 (GSVDDGKS) is G1. 33-40 (GSVDDGKS) serves as a coordination point for GTP. The tract at residues 91-95 (GITID) is G2. The segment at 112 to 115 (DTPG) is G3. Residues 112-116 (DTPGH) and 167-170 (NKMD) contribute to the GTP site. Residues 167 to 170 (NKMD) are G4. The G5 stretch occupies residues 205 to 207 (SAL).

It belongs to the TRAFAC class translation factor GTPase superfamily. Classic translation factor GTPase family. CysN/NodQ subfamily. As to quaternary structure, heterodimer composed of CysD, the smaller subunit, and CysN.

The catalysed reaction is sulfate + ATP + H(+) = adenosine 5'-phosphosulfate + diphosphate. It participates in sulfur metabolism; hydrogen sulfide biosynthesis; sulfite from sulfate: step 1/3. Functionally, with CysD forms the ATP sulfurylase (ATPS) that catalyzes the adenylation of sulfate producing adenosine 5'-phosphosulfate (APS) and diphosphate, the first enzymatic step in sulfur assimilation pathway. APS synthesis involves the formation of a high-energy phosphoric-sulfuric acid anhydride bond driven by GTP hydrolysis by CysN coupled to ATP hydrolysis by CysD. The sequence is that of Sulfate adenylyltransferase subunit 1 from Vibrio parahaemolyticus serotype O3:K6 (strain RIMD 2210633).